Reading from the N-terminus, the 677-residue chain is Polyunsaturated fatty acid lipoxygenase ALOX15B (677 aa).

Residues 2–125 (AKFRVRVSTG…ELVLREGAAK (124 aa)) form the PLAT domain. 8 residues coordinate Ca(2+): G15, G17, D39, H40, G42, E44, D86, and A87. The Lipoxygenase domain occupies 126–677 (VSWQDHHRTL…PPLIENSVSI (552 aa)). 4 residues coordinate Fe cation: H374, H379, H554, and I677.

Belongs to the lipoxygenase family. It depends on Fe cation as a cofactor.

Its subcellular location is the cytoplasm. It is found in the cytosol. It localises to the cell membrane. The protein localises to the cytoskeleton. The protein resides in the membrane. Its subcellular location is the cell junction. It is found in the adherens junction. It localises to the focal adhesion. The protein localises to the nucleus. The catalysed reaction is (5Z,8Z,11Z,14Z)-eicosatetraenoate + O2 = (15S)-hydroperoxy-(5Z,8Z,11Z,13E)-eicosatetraenoate. It carries out the reaction (9Z,12Z)-octadecadienoate + O2 = 13-hydroperoxy-(9Z,11E)-octadecadienoate. The enzyme catalyses (5S)-hydroxy-(6E,8Z,11Z,14Z)-eicosatetraenoate + O2 = (5S)-hydroxy-(15S)-hydroperoxy-(6E,8Z,11Z,13E)-eicosatetraenoate. It catalyses the reaction (5Z,8Z,11Z,14Z)-eicosatetraenoate + O2 = 5-hydroperoxy-(6E,8Z,11Z,14Z)-eicosatetraenoate. The catalysed reaction is (5S,6R)-dihydroxy-(7E,9E,11Z,14Z)-eicosatetraenoate + O2 = (5S,6R)-dihydroxy-(15S)-hydroperoxy-(7E,9E,11Z,13E)-eicosatetraenoate. It carries out the reaction (5S)-hydroperoxy-(6E,8Z,11Z,14Z)-eicosatetraenoate + O2 = (5S,15S)-dihydroperoxy-(6E,8Z,11Z,13E)-eicosatetraenoate. The enzyme catalyses 2-(5Z,8Z,11Z,14Z-eicosatetraenoyl)-glycerol + O2 = 2-[15(S)-hydroperoxy-(5Z,8Z,11Z,13E)-eicosatetraenoyl]-glycerol. It catalyses the reaction (8S)-hydroperoxy-(5Z,9E,11Z,14Z)-eicosatetraenoate + O2 = (8S,15S)-dihydroperoxy-(5Z,9E,11Z,13E)-eicosatetraenoate. The catalysed reaction is N-(5Z,8Z,11Z,14Z)-eicosatetraenoyl-L-alanine + O2 = N-(15S)-hydroperoxy-(5Z,8Z,11Z,13E)-eicosatetraenoyl-alanine. It carries out the reaction N-(5Z,8Z,11Z,14Z)-eicosatetraenoyl-gamma-aminobutanoate + O2 = N-(15S)-hydroperoxy-(5Z,8Z,11Z,13E)-eicosatetraenoyl-gamma-aminobutanoate. The enzyme catalyses N-(5Z,8Z,11Z,14Z)-eicosatetraenoyl-glycine + O2 = N-(15S)-hydroperoxy-(5Z,8Z,11Z,13E)-eicosatetraenoyl-glycine. It catalyses the reaction N-(5Z,8Z,11Z,14Z)-eicosatetraenoyl-taurine + O2 = N-(15S)-hydroperoxy-(5Z,8Z,11Z,13E)-eicosatetraenoyl-taurine. The catalysed reaction is 2-(5Z,8Z,11Z,14Z-eicosatetraenoyl)-glycerol + O2 = 2-[12-hydroperoxy-(5Z,8Z,10E,14Z)-eicosatetraenoyl]-glycerol. It carries out the reaction 1-octadecanoyl-2-(5Z,8Z,11Z,14Z-eicosatetraenoyl)-sn-glycero-3-phosphocholine + O2 = 1-octadecanoyl-2-(15-hydroperoxy-5Z,8Z,11Z,13E-eicosatetraenoyl)-sn-glycero-3-phosphocholine. The enzyme catalyses a 1-acyl-2-(5Z,8Z,11Z,14Z-eicosatetraenoyl)-sn-glycero-3-phospho-(1D-myo-inositol) + O2 = a 1-acyl-2-(15-hydroperoxy-5Z,8Z,11Z,13E-eicosatetraenoyl)-sn-glycero-3-phospho-(1D-myo-inositol). It catalyses the reaction a 1-acyl-2-(8Z,11Z,14Z-eicosatrienoyl)-sn-glycero-3-phospho-(1D-myo-inositol) + O2 = a 1-acyl-2-(15-hydroperoxy-8Z,11Z,13E-eicosatrienoyl)-sn-glycero-3-phospho-(1D-myo-inositol). The catalysed reaction is 1-octadecanoyl-2-(5Z,8Z,11Z,14Z)-eicosatetraenoyl-sn-glycero-3-phosphoethanolamine + O2 = 1-octadecanoyl-2-(15-hydroperoxy-5Z,8Z,11Z,13E-eicosatetraenoyl)-sn-glycero-3-phosphoethanolamine. It carries out the reaction 1-octadecanoyl-2-(5Z,8Z,11Z,14Z-eicosatetraenoyl)-sn-glycero-3-phospho-(1D-myo-inositol) + O2 = 1-octadecanoyl-2-(15-hydroperoxy-5Z,8Z,11Z,13E-eicosatetraenoyl)-sn-glycero-3-phospho-(1D-myo-inositol). The enzyme catalyses (8Z,11Z,14Z)-eicosatrienoate + O2 = 15-hydroperoxy-(8Z,11Z,13E)-eicosatrienoate. It catalyses the reaction (7S)-hydroperoxy-(4Z,8E,10Z,13Z,16Z,19Z)-docosahexaenoate + O2 = (7S,17S)-dihydroperoxy-(4Z,8E,10Z,13Z,15E,19Z)-docosahexaenoate. It participates in lipid metabolism; hydroperoxy eicosatetraenoic acid biosynthesis. Its function is as follows. Non-heme iron-containing dioxygenase that catalyzes the stereo-specific peroxidation of free and esterified polyunsaturated fatty acids (PUFAs) generating a spectrum of bioactive lipid mediators. Inserts a peroxyl group at C15 of arachidonate ((5Z,8Z,11Z,14Z)-eicosatetraenoate) producing (15S)-hydroperoxyeicosatetraenoate/(15S)-HPETE. Also peroxidizes linoleate ((9Z,12Z)-octadecadienoate) to 13-hydroperoxyoctadecadienoate/13-HPODE. Oxygenates arachidonyl derivatives such as 2-arachidonoylglycerol (2-AG) leading to the production and extracellular release of 15-hydroxyeicosatetraenoyl glycerol (15-HETE-G) that acts as a peroxisome proliferator-activated receptor alpha agonist. Has the ability to efficiently class-switch ALOX5 pro-inflammatory mediators into anti-inflammatory intermediates. Participates in the sequential oxidations of DHA ((4Z,7Z,10Z,13Z,16Z,19Z)-docosahexaenoate) to generate specialized pro-resolving mediators (SPMs) resolvin D5 ((7S,17S)-diHPDHA), which can actively down-regulate the immune response and have anti-aggregation properties with platelets. In addition to free PUFAs hydrolyzed from phospholipids, it directly oxidizes PUFAs esterified to membrane-bound phospholipids. Has no detectable 8S-lipoxygenase activity on arachidonate but reacts with (8S)-HPETE to produce (8S,15S)-diHPETE. May regulate progression through the cell cycle and cell proliferation. May also regulate cytokine secretion by macrophages and therefore play a role in the immune response. May also regulate macrophage differentiation into proatherogenic foam cells. The polypeptide is Polyunsaturated fatty acid lipoxygenase ALOX15B (Rattus norvegicus (Rat)).